The primary structure comprises 295 residues: Small ribosomal subunit protein uS2 (295 aa).

This sequence belongs to the universal ribosomal protein uS2 family.

The chain is Small ribosomal subunit protein uS2 from Rickettsia typhi (strain ATCC VR-144 / Wilmington).